Here is a 691-residue protein sequence, read N- to C-terminus: Threonine--tRNA ligase (691 aa).

The segment at 1–22 (MSVPAQPAPGADGGDPRQPIRV) is disordered. The TGS domain maps to 1–73 (MSVPAQPAPG…DADAEVTPIA (73 aa)). Residues 268-574 (DHRKLGVELD…LTEHYAGAFP (307 aa)) are catalytic. Zn(2+)-binding residues include cysteine 373, histidine 424, and histidine 551.

It belongs to the class-II aminoacyl-tRNA synthetase family. As to quaternary structure, homodimer. Requires Zn(2+) as cofactor.

The protein resides in the cytoplasm. It catalyses the reaction tRNA(Thr) + L-threonine + ATP = L-threonyl-tRNA(Thr) + AMP + diphosphate + H(+). Catalyzes the attachment of threonine to tRNA(Thr) in a two-step reaction: L-threonine is first activated by ATP to form Thr-AMP and then transferred to the acceptor end of tRNA(Thr). Also edits incorrectly charged L-seryl-tRNA(Thr). In Mycobacterium marinum (strain ATCC BAA-535 / M), this protein is Threonine--tRNA ligase.